We begin with the raw amino-acid sequence, 149 residues long: Probable ubiquitin-conjugating enzyme E2 12 (149 aa).

The segment covering 1-15 (MASKRISRELRDMQR) has biased composition (basic and acidic residues). A disordered region spans residues 1 to 22 (MASKRISRELRDMQRHPPANCS). The UBC core domain maps to 1-148 (MASKRISREL…AQKWTQKYAM (148 aa)). Residue Cys86 is the Glycyl thioester intermediate of the active site.

Belongs to the ubiquitin-conjugating enzyme family. As to expression, ubiquitously expressed at very low levels.

It carries out the reaction S-ubiquitinyl-[E1 ubiquitin-activating enzyme]-L-cysteine + [E2 ubiquitin-conjugating enzyme]-L-cysteine = [E1 ubiquitin-activating enzyme]-L-cysteine + S-ubiquitinyl-[E2 ubiquitin-conjugating enzyme]-L-cysteine.. Its pathway is protein modification; protein ubiquitination. Functionally, accepts the ubiquitin from the E1 complex and catalyzes its covalent attachment to other proteins. This Arabidopsis thaliana (Mouse-ear cress) protein is Probable ubiquitin-conjugating enzyme E2 12 (UBC12).